We begin with the raw amino-acid sequence, 264 residues long: Thiazole synthase (264 aa).

Lys106 serves as the catalytic Schiff-base intermediate with DXP. Residues Gly167, 193-194 (AG), and 215-216 (NT) each bind 1-deoxy-D-xylulose 5-phosphate.

The protein belongs to the ThiG family. In terms of assembly, homotetramer. Forms heterodimers with either ThiH or ThiS.

It localises to the cytoplasm. It catalyses the reaction [ThiS sulfur-carrier protein]-C-terminal-Gly-aminoethanethioate + 2-iminoacetate + 1-deoxy-D-xylulose 5-phosphate = [ThiS sulfur-carrier protein]-C-terminal Gly-Gly + 2-[(2R,5Z)-2-carboxy-4-methylthiazol-5(2H)-ylidene]ethyl phosphate + 2 H2O + H(+). It participates in cofactor biosynthesis; thiamine diphosphate biosynthesis. Its function is as follows. Catalyzes the rearrangement of 1-deoxy-D-xylulose 5-phosphate (DXP) to produce the thiazole phosphate moiety of thiamine. Sulfur is provided by the thiocarboxylate moiety of the carrier protein ThiS. In vitro, sulfur can be provided by H(2)S. The protein is Thiazole synthase of Thioalkalivibrio sulfidiphilus (strain HL-EbGR7).